A 400-amino-acid chain; its full sequence is NADPH dehydrogenase 3 (400 aa).

Positions 38 and 115 each coordinate FMN. 2 residues coordinate substrate: histidine 192 and asparagine 195. The Proton donor role is filled by tyrosine 197. Positions 244 and 349 each coordinate FMN. Tyrosine 376 provides a ligand contact to substrate.

Homodimer or heterodimer with OYE2. Requires FMN as cofactor.

It carries out the reaction A + NADPH + H(+) = AH2 + NADP(+). In terms of biological role, flavin-dependent enoate reductase that catalyzes the chemo- and stereoslective hydrogenation of electron-poor alkenes. The enzyme is reduced by NADPH, and oxygen, quinones, and alpha,beta-unsaturated aldehydes and ketones can act as electron acceptors to complete catalytic turnover. The physiological oxidant remains elusive. Has a prooxidant activity, increasing reactive oxygen species (ROS) levels when overexpressed. Formation of OYE2-OYE3 heterodimers contribute to the induction of programmed cell death upon oxidative stress. This chain is NADPH dehydrogenase 3, found in Saccharomyces cerevisiae (strain ATCC 204508 / S288c) (Baker's yeast).